A 304-amino-acid chain; its full sequence is Undecaprenyl-diphosphatase (304 aa).

The next 8 helical transmembrane spans lie at 5–25, 47–67, 72–92, 111–131, 137–157, 209–231, 248–268, and 282–302; these read FLFILKALIIAIVEGLTEFVP, GFPEMYEVVIQLGAILAVVVL, ISSSVVEFLSYIFSFIGLKAS, FGINVIIGTIPAAILGLLFHD, LFSTKTVAIGFIVGGILLIVI, ISGLSTTVATEFTFFLAIPAMVG, TNLISLILGFIVAFIVSLVVI, and IFAIYRVFAGIVLAILIFTKV.

It belongs to the UppP family.

The protein resides in the cell membrane. It catalyses the reaction di-trans,octa-cis-undecaprenyl diphosphate + H2O = di-trans,octa-cis-undecaprenyl phosphate + phosphate + H(+). Catalyzes the dephosphorylation of undecaprenyl diphosphate (UPP). Confers resistance to bacitracin. This chain is Undecaprenyl-diphosphatase, found in Clostridium perfringens (strain SM101 / Type A).